Consider the following 415-residue polypeptide: rRNA methyltransferase 3, mitochondrial (415 aa).

Residues 1–47 (MAALCRGTVRACILKPLGLSVSLQVKRNVRALRRTPVRVLPAAEKGR) constitute a mitochondrion transit peptide. Residues 41–73 (PAAEKGRERKEVEARRPQQPRQSEYQTRTSQGV) form a disordered region. The span at 44–56 (EKGRERKEVEARR) shows a compositional bias: basic and acidic residues. Polar residues predominate over residues 59–73 (QPRQSEYQTRTSQGV). The S-adenosyl-L-methionine site is built by glycine 357, isoleucine 381, and leucine 390.

Belongs to the class IV-like SAM-binding methyltransferase superfamily. RNA methyltransferase TrmH family.

The protein localises to the mitochondrion. It catalyses the reaction a uridine in rRNA + S-adenosyl-L-methionine = a 2'-O-methyluridine in rRNA + S-adenosyl-L-homocysteine + H(+). Its function is as follows. S-adenosyl-L-methionine-dependent 2'-O-ribose methyltransferase that catalyzes the formation of 2'-O-methylguanosine at position 1370 (Gm1370) in the mitochondrial large subunit ribosomal RNA (mtLSU rRNA), a conserved modification in the peptidyl transferase domain of the mtLSU rRNA. Also required for formation of 2'-O-methyluridine at position 1369 (Um1369) mediated by MRM2. The protein is rRNA methyltransferase 3, mitochondrial of Xenopus tropicalis (Western clawed frog).